Here is a 380-residue protein sequence, read N- to C-terminus: tRNA-specific 2-thiouridylase MnmA (380 aa).

Residues 6-13 (ALSGGVDS) and Met32 each bind ATP. Residue Cys101 is the Nucleophile of the active site. Cys101 and Cys199 are disulfide-bonded. Position 125 (Gly125) interacts with ATP. Positions 148-150 (KDQ) are interaction with tRNA. Catalysis depends on Cys199, which acts as the Cysteine persulfide intermediate.

Belongs to the MnmA/TRMU family.

It localises to the cytoplasm. The enzyme catalyses S-sulfanyl-L-cysteinyl-[protein] + uridine(34) in tRNA + AH2 + ATP = 2-thiouridine(34) in tRNA + L-cysteinyl-[protein] + A + AMP + diphosphate + H(+). Catalyzes the 2-thiolation of uridine at the wobble position (U34) of tRNA, leading to the formation of s(2)U34. In Beutenbergia cavernae (strain ATCC BAA-8 / DSM 12333 / CCUG 43141 / JCM 11478 / NBRC 16432 / NCIMB 13614 / HKI 0122), this protein is tRNA-specific 2-thiouridylase MnmA.